We begin with the raw amino-acid sequence, 466 residues long: Soluble pyridine nucleotide transhydrogenase (466 aa).

Residue 36-45 coordinates FAD; that stretch reads EKESSVGGGC.

The protein belongs to the class-I pyridine nucleotide-disulfide oxidoreductase family. FAD is required as a cofactor.

The protein resides in the cytoplasm. The enzyme catalyses NAD(+) + NADPH = NADH + NADP(+). Its function is as follows. Conversion of NADPH, generated by peripheral catabolic pathways, to NADH, which can enter the respiratory chain for energy generation. The chain is Soluble pyridine nucleotide transhydrogenase from Vibrio vulnificus (strain CMCP6).